The chain runs to 146 residues: Large ribosomal subunit protein mL49 (146 aa).

The transit peptide at 1–38 directs the protein to the mitochondrion; the sequence is MISSCVTRCFGRGKCLPGPATASIYQTIRCISTNSNKA.

The protein belongs to the mitochondrion-specific ribosomal protein mL49 family. In terms of assembly, component of the mitochondrial large ribosomal subunit (mt-LSU). Mature yeast 74S mitochondrial ribosomes consist of a small (37S) and a large (54S) subunit. The 37S small subunit contains a 15S ribosomal RNA (15S mt-rRNA) and 34 different proteins. The 54S large subunit contains a 21S rRNA (21S mt-rRNA) and 46 different proteins.

The protein resides in the mitochondrion. Its function is as follows. Component of the mitochondrial ribosome (mitoribosome), a dedicated translation machinery responsible for the synthesis of mitochondrial genome-encoded proteins, including at least some of the essential transmembrane subunits of the mitochondrial respiratory chain. The mitoribosomes are attached to the mitochondrial inner membrane and translation products are cotranslationally integrated into the membrane. The polypeptide is Large ribosomal subunit protein mL49 (IMG2) (Saccharomyces cerevisiae (strain ATCC 204508 / S288c) (Baker's yeast)).